Consider the following 39-residue polypeptide: Cygnin (39 aa).

Position 1 is a pyrrolidone carboxylic acid (Q1). 3 cysteine pairs are disulfide-bonded: C6–C33, C12–C28, and C16–C32.

It belongs to the transferrin family.

This Cygnus atratus (Black swan) protein is Cygnin.